Reading from the N-terminus, the 479-residue chain is PRAME family member 19 (479 aa).

One copy of the LRR 1 repeat lies at 15-38 (QSLLRDQALAISVLDELPRELFPR). The LRR 1; degenerate repeat unit spans residues 97 to 124 (RWKLQVLEMRDVDENFWTIWSGARPLSC). Residues 179-203 (HLCCTKVVNYSMNILNFRNILETVY) form an LRR 2; degenerate repeat. An LRR 3; degenerate repeat occupies 204-230 (PDSIQVLEIWNMCWPCMVAEVSRYLSQ). The LRR 4; degenerate repeat unit spans residues 231–265 (MKNLRKLFISDGCGYLPSFESQGQLVAEFSSVFLR). 5 LRR repeats span residues 266 to 291 (LEYL…IRCL), 292 to 323 (KSPL…SQLK), 324 to 342 (QLNL…PLRA), 348 to 375 (AATL…ALSR), and 376 to 400 (CSNL…LLRH).

It belongs to the PRAME family.

The protein is PRAME family member 19 of Homo sapiens (Human).